The chain runs to 575 residues: MRPWTGSWRWIMLILFAWGTLLFYIGGHLVRDNDHPDHSSRELSKILAKLERLKQQNEDLRRMAESLRIPEGPIDQGPAIGRVRVLEEQLVKAKEQIENYKKQTRNGLGKDHEILRRRIENGAKELWFFLQSELKKLKNLEGNELQRHADEFLLDLGHHERSIMTDLYYLSQTDGAGDWREKEAKDLTELVQRRITYLQNPKDCSKAKKLVCNINKGCGYGCQLHHVVYCFMIAYGTQRTLILESQNWRYATGGWETVFRPVSETCTDRSGISTGHWSGEVKDKNVQVVELPIVDSLHPRPPYLPLAVPEDLADRLVRVHGDPAVWWVSQFVKYLIRPQPWLEKEIEEATKKLGFKHPVIGVHVRRTDKVGTEAAFHPIEEYMVHVEEHFQLLARRMQVDKKRVYLATDDPSLLKEAKTKYPNYEFISDNSISWSAGLHNRYTENSLRGVILDIHFLSQADFLVCTFSSQVCRVAYEIMQTLHPDASANFHSLDDIYYFGGQNAHNQIAIYAHQPRTADEIPMEPGDIIGVAGNHWDGYSKGVNRKLGRTGLYPSYKVREKIETVKYPTYPEAEK.

Over 1–9 (MRPWTGSWR) the chain is Cytoplasmic. The chain crosses the membrane as a helical; Signal-anchor for type II membrane protein span at residues 10-30 (WIMLILFAWGTLLFYIGGHLV). Topologically, residues 31 to 575 (RDNDHPDHSS…KYPTYPEAEK (545 aa)) are lumenal. Cystine bridges form between Cys204–Cys266, Cys212–Cys230, and Cys218–Cys222. Residues 206–493 (KAKKLVCNIN…PDASANFHSL (288 aa)) enclose the GT23 domain. Residue Ser278 is modified to Phosphoserine. The SH3-binding motif lies at 299 to 305 (PRPPYLP). The segment at 365–366 (RR) is important for donor substrate binding. The cysteines at positions 465 and 472 are disulfide-linked. The region spanning 502 to 563 (QNAHNQIAIY…PSYKVREKIE (62 aa)) is the SH3 domain.

It belongs to the glycosyltransferase 23 family. Tyrosine phosphorylated by PKDCC/VLK.

It is found in the golgi apparatus. It localises to the golgi stack membrane. It catalyses the reaction N(4)-{beta-D-GlcNAc-(1-&gt;2)-alpha-D-Man-(1-&gt;3)-[beta-D-GlcNAc-(1-&gt;2)-alpha-D-Man-(1-&gt;6)]-beta-D-Man-(1-&gt;4)-beta-D-GlcNAc-(1-&gt;4)-beta-D-GlcNAc}-L-asparaginyl-[protein] + GDP-beta-L-fucose = an N(4)-{beta-D-GlcNAc-(1-&gt;2)-alpha-D-Man-(1-&gt;3)-[beta-D-GlcNAc-(1-&gt;2)-alpha-D-Man-(1-&gt;6)]-beta-D-Man-(1-&gt;4)-beta-D-GlcNAc-(1-&gt;4)-[alpha-L-Fuc-(1-&gt;6)]-beta-D-GlcNAc}-L-asparaginyl-[protein] + GDP + H(+). The protein operates within protein modification; protein glycosylation. Functionally, catalyzes the addition of fucose in alpha 1-6 linkage to the first GlcNAc residue, next to the peptide chains in N-glycans. This chain is Alpha-(1,6)-fucosyltransferase (FUT8), found in Homo sapiens (Human).